We begin with the raw amino-acid sequence, 301 residues long: Acetyl-coenzyme A carboxylase carboxyl transferase subunit beta (301 aa).

The CoA carboxyltransferase N-terminal domain occupies Leu-25–Thr-294. Positions Gln-282–Ala-301 are disordered. The segment covering Ala-288–Ala-301 has biased composition (basic and acidic residues).

This sequence belongs to the AccD/PCCB family. In terms of assembly, acetyl-CoA carboxylase is a heterohexamer composed of biotin carboxyl carrier protein (AccB), biotin carboxylase (AccC) and two subunits each of ACCase subunit alpha (AccA) and ACCase subunit beta (AccD).

It localises to the cytoplasm. The catalysed reaction is N(6)-carboxybiotinyl-L-lysyl-[protein] + acetyl-CoA = N(6)-biotinyl-L-lysyl-[protein] + malonyl-CoA. The protein operates within lipid metabolism; malonyl-CoA biosynthesis; malonyl-CoA from acetyl-CoA: step 1/1. In terms of biological role, component of the acetyl coenzyme A carboxylase (ACC) complex. Biotin carboxylase (BC) catalyzes the carboxylation of biotin on its carrier protein (BCCP) and then the CO(2) group is transferred by the transcarboxylase to acetyl-CoA to form malonyl-CoA. The polypeptide is Acetyl-coenzyme A carboxylase carboxyl transferase subunit beta (Brucella anthropi (strain ATCC 49188 / DSM 6882 / CCUG 24695 / JCM 21032 / LMG 3331 / NBRC 15819 / NCTC 12168 / Alc 37) (Ochrobactrum anthropi)).